The chain runs to 97 residues: MTAKGQMLQDPFLNALRKEHVPVSIYLVNGIKLQGQVESFDQYVVLLRNTSVTQMVYKHAISTIVPARSVNLQHENRPQAAPTSTLVQVETVQQPAE.

The 61-residue stretch at 10-70 (DPFLNALRKE…ISTIVPARSV (61 aa)) folds into the Sm domain. A disordered region spans residues 74–97 (HENRPQAAPTSTLVQVETVQQPAE). A compositionally biased stretch (polar residues) spans 81 to 97 (APTSTLVQVETVQQPAE).

Belongs to the Hfq family. Homohexamer.

Its function is as follows. RNA chaperone that binds small regulatory RNA (sRNAs) and mRNAs to facilitate mRNA translational regulation in response to envelope stress, environmental stress and changes in metabolite concentrations. Also binds with high specificity to tRNAs. The polypeptide is RNA-binding protein Hfq (Neisseria meningitidis serogroup A / serotype 4A (strain DSM 15465 / Z2491)).